Reading from the N-terminus, the 212-residue chain is N-acetyltransferase 9-like protein (212 aa).

Positions E34–D201 constitute an N-acetyltransferase domain.

This sequence belongs to the acetyltransferase family. GNAT subfamily.

The polypeptide is N-acetyltransferase 9-like protein (nat9) (Dictyostelium discoideum (Social amoeba)).